A 551-amino-acid chain; its full sequence is Scaffold protein OPG125 (551 aa).

It belongs to the orthopoxvirus protein OPG125 family. Homotrimer. Self-assembles to form a layer. Interacts with OPG158 (via N-terminus); this interaction is necessary for OPG125 association with membranes.

It localises to the membrane. Its function is as follows. Scaffold protein which forms a transitory spherical honeycomb lattice providing curvature and rigidity to the convex membrane of crescent and immature virions (IV). This association occurs concomitantly with viral membrane formation. Targeted by the drug rifampicin, which prevents the formation of this lattice, and hence virus morphogenesis. In the presence of rifampicin, irregularly shaped membranes that lack the honeycomb layer accumulate around areas of electron-dense viroplasm. This layer is lost from virions during maturation from IV to mature virion (MV), through the proteolysis of OPG158 N-terminus. The polypeptide is Scaffold protein OPG125 (OPG125) (Homo sapiens (Human)).